The primary structure comprises 335 residues: Methionine import ATP-binding protein MetN (335 aa).

The ABC transporter domain occupies 2–241 (IEFQRLHKSY…PKHVTTRRFV (240 aa)). 38–45 (GHSGAGKS) contacts ATP.

The protein belongs to the ABC transporter superfamily. Methionine importer (TC 3.A.1.24) family. The complex is composed of two ATP-binding proteins (MetN), two transmembrane proteins (MetI) and a solute-binding protein (MetQ).

It is found in the cell inner membrane. The enzyme catalyses L-methionine(out) + ATP + H2O = L-methionine(in) + ADP + phosphate + H(+). The catalysed reaction is D-methionine(out) + ATP + H2O = D-methionine(in) + ADP + phosphate + H(+). Part of the ABC transporter complex MetNIQ involved in methionine import. Responsible for energy coupling to the transport system. In Xanthomonas oryzae pv. oryzae (strain KACC10331 / KXO85), this protein is Methionine import ATP-binding protein MetN.